Reading from the N-terminus, the 23-residue chain is Basic phospholipase A2 homolog CTs-K49c (23 aa).

Post-translationally, contains 7 disulfide bonds. As to expression, expressed by the venom gland.

It localises to the secreted. Functionally, snake venom phospholipase A2 homolog that lacks catalytic activity. Shows myotoxic activities. Induces local edema a few hours after injection (5-10 ug) in the hind paw. This Trimeresurus stejnegeri (Chinese green tree viper) protein is Basic phospholipase A2 homolog CTs-K49c.